The chain runs to 840 residues: Leucine--tRNA ligase (840 aa).

The 'HIGH' region motif lies at 44–55 (PYPSANGLHVGH). A 'KMSKS' region motif is present at residues 617–621 (KMSKS). Lys-620 contacts ATP.

Belongs to the class-I aminoacyl-tRNA synthetase family.

It is found in the cytoplasm. The enzyme catalyses tRNA(Leu) + L-leucine + ATP = L-leucyl-tRNA(Leu) + AMP + diphosphate. In Borreliella burgdorferi (strain ZS7) (Borrelia burgdorferi), this protein is Leucine--tRNA ligase.